The primary structure comprises 105 residues: TYVIAQPCVDVKDKACIEECPVDCIYEGQRSLYIHPDECVDCGACEPVCPVEAIFYEDDTPEEWKDYYKANVEFFDDLGSPGGASKLGLIERDHPFVAGLPPQNA.

The [3Fe-4S] cluster site is built by cysteine 8 and cysteine 16. [4Fe-4S] cluster is bound by residues cysteine 20, cysteine 39, cysteine 42, and cysteine 45. Positions 30–59 constitute a 4Fe-4S ferredoxin-type domain; sequence RSLYIHPDECVDCGACEPVCPVEAIFYEDD. Cysteine 49 lines the [3Fe-4S] cluster pocket.

[4Fe-4S] cluster is required as a cofactor. The cofactor is [3Fe-4S] cluster.

Its function is as follows. Ferredoxins are iron-sulfur proteins that transfer electrons in a wide variety of metabolic reactions. Functionally, putative electron transport protein for the cytochrome P-450SOY system from the same organism. The polypeptide is Ferredoxin (Streptomyces griseus).